Consider the following 267-residue polypeptide: Acyl-[acyl-carrier-protein]--UDP-N-acetylglucosamine O-acyltransferase (267 aa).

Belongs to the transferase hexapeptide repeat family. LpxA subfamily. As to quaternary structure, homotrimer.

Its subcellular location is the cytoplasm. It catalyses the reaction a (3R)-hydroxyacyl-[ACP] + UDP-N-acetyl-alpha-D-glucosamine = a UDP-3-O-[(3R)-3-hydroxyacyl]-N-acetyl-alpha-D-glucosamine + holo-[ACP]. The protein operates within glycolipid biosynthesis; lipid IV(A) biosynthesis; lipid IV(A) from (3R)-3-hydroxytetradecanoyl-[acyl-carrier-protein] and UDP-N-acetyl-alpha-D-glucosamine: step 1/6. Functionally, involved in the biosynthesis of lipid A, a phosphorylated glycolipid that anchors the lipopolysaccharide to the outer membrane of the cell. The protein is Acyl-[acyl-carrier-protein]--UDP-N-acetylglucosamine O-acyltransferase of Cupriavidus taiwanensis (strain DSM 17343 / BCRC 17206 / CCUG 44338 / CIP 107171 / LMG 19424 / R1) (Ralstonia taiwanensis (strain LMG 19424)).